Consider the following 81-residue polypeptide: Photosystem I iron-sulfur center (81 aa).

2 consecutive 4Fe-4S ferredoxin-type domains span residues 2–31 (AHSV…MIPW) and 39–68 (IASA…VRVY). 8 residues coordinate [4Fe-4S] cluster: Cys11, Cys14, Cys17, Cys21, Cys48, Cys51, Cys54, and Cys58.

In terms of assembly, the eukaryotic PSI reaction center is composed of at least 11 subunits. [4Fe-4S] cluster is required as a cofactor.

It localises to the plastid. Its subcellular location is the chloroplast thylakoid membrane. It carries out the reaction reduced [plastocyanin] + hnu + oxidized [2Fe-2S]-[ferredoxin] = oxidized [plastocyanin] + reduced [2Fe-2S]-[ferredoxin]. Apoprotein for the two 4Fe-4S centers FA and FB of photosystem I (PSI); essential for photochemical activity. FB is the terminal electron acceptor of PSI, donating electrons to ferredoxin. The C-terminus interacts with PsaA/B/D and helps assemble the protein into the PSI complex. Required for binding of PsaD and PsaE to PSI. PSI is a plastocyanin-ferredoxin oxidoreductase, converting photonic excitation into a charge separation, which transfers an electron from the donor P700 chlorophyll pair to the spectroscopically characterized acceptors A0, A1, FX, FA and FB in turn. In Pinus thunbergii (Japanese black pine), this protein is Photosystem I iron-sulfur center.